We begin with the raw amino-acid sequence, 253 residues long: Triosephosphate isomerase (253 aa).

8–10 (NWK) is a substrate binding site. Residue H93 is the Electrophile of the active site. The active-site Proton acceptor is E165. Substrate-binding positions include G171, S210, and 231–232 (GG).

This sequence belongs to the triosephosphate isomerase family. In terms of assembly, homodimer.

The protein localises to the cytoplasm. The enzyme catalyses D-glyceraldehyde 3-phosphate = dihydroxyacetone phosphate. The protein operates within carbohydrate biosynthesis; gluconeogenesis. It functions in the pathway carbohydrate degradation; glycolysis; D-glyceraldehyde 3-phosphate from glycerone phosphate: step 1/1. Functionally, involved in the gluconeogenesis. Catalyzes stereospecifically the conversion of dihydroxyacetone phosphate (DHAP) to D-glyceraldehyde-3-phosphate (G3P). The polypeptide is Triosephosphate isomerase (Francisella tularensis subsp. tularensis (strain FSC 198)).